The sequence spans 152 residues: 3-dehydroquinate dehydratase (152 aa).

The active-site Proton acceptor is the Tyr-26. Substrate-binding residues include Asn-77, His-83, and Asp-90. Residue His-103 is the Proton donor of the active site. Residues 104–105 and Arg-114 each bind substrate; that span reads LS.

Belongs to the type-II 3-dehydroquinase family. Homododecamer.

It catalyses the reaction 3-dehydroquinate = 3-dehydroshikimate + H2O. The protein operates within metabolic intermediate biosynthesis; chorismate biosynthesis; chorismate from D-erythrose 4-phosphate and phosphoenolpyruvate: step 3/7. Functionally, catalyzes a trans-dehydration via an enolate intermediate. In Tolumonas auensis (strain DSM 9187 / NBRC 110442 / TA 4), this protein is 3-dehydroquinate dehydratase.